A 587-amino-acid polypeptide reads, in one-letter code: Heavy metal-associated isoprenylated plant protein 33 (587 aa).

The region spanning 9 to 72 (IQTCVLKVNI…KLLKSGKHAE (64 aa)) is the HMA domain. Residues C20 and C23 each contribute to the a metal cation site. 5 disordered regions span residues 98–146 (QIDH…MVIP), 176–261 (LKLP…KPMM), 287–449 (AHKN…PMSN), 462–504 (PGGG…QQQQ), and 532–587 (YARP…CNIM). Composition is skewed to gly residues over residues 104–113 (KGGGGGGGGP) and 121–140 (KIGGGGGGGGGGGGGGGGGP). A compositionally biased stretch (low complexity) spans 194–208 (PMNKNPQMPNNPNQK). Acidic residues predominate over residues 215–248 (PDDDDEEDFSDEFDDEFDEDDDEFDDDLEDDEFD). 3 stretches are compositionally biased toward gly residues: residues 290–300 (NGGGPGPAGGK), 312–419 (MGGG…GGGP), and 428–445 (GAMGGPMGSLPQMGGGPG). Low complexity predominate over residues 471–483 (SAEAPPGYFQGQV). 2 stretches are compositionally biased toward pro residues: residues 534–547 (RPPPAVNYMPPQPQ) and 554–565 (YPYPYPYPPQYP). Residues 578 to 587 (DENTSSCNIM) are compositionally biased toward polar residues. Position 584 is a cysteine methyl ester (C584). C584 is lipidated: S-farnesyl cysteine. The propeptide at 585-587 (NIM) is removed in mature form.

The protein belongs to the HIPP family.

Functionally, heavy-metal-binding protein. The protein is Heavy metal-associated isoprenylated plant protein 33 of Arabidopsis thaliana (Mouse-ear cress).